Consider the following 780-residue polypeptide: E3 SUMO-protein ligase gei-17 (780 aa).

The tract at residues 181-210 (APLHSSFPNHGRSSQQSLQKSEKSNRPKKM) is disordered. The region spanning 203–367 (KSNRPKKMYA…AAGVYFVHRV (165 aa)) is the PINIT domain. Residues 400 to 485 (GEDDIAMDRL…LAKVDKNTTE (86 aa)) form an SP-RING-type zinc finger. Positions 431, 433, 454, and 457 each coordinate Zn(2+). A compositionally biased stretch (polar residues) spans 519-530 (GTASCSSTNGNG). Disordered regions lie at residues 519–544 (GTAS…ADDD), 560–594 (IMNS…KTKD), and 732–755 (QQHH…SFYA). Low complexity predominate over residues 732–749 (QQHHLQQQQQQQQSPQIM).

It belongs to the PIAS family. In terms of assembly, may interact with gex-3.

Its pathway is protein modification; protein sumoylation. Functions as an E3-type smo-1 ligase. Mediates smo-1 conjugation to air-2 in vitro and is required for proper chromosome alignment. In the early embryo, specifically suppresses checkpoint activation in response to DNA damage, maybe by promoting mus-101 sumoylation. In embryos, plays a role in determining telomere localization in the nucleus. Acts with pie-1 to promote piRNA-mediated silencing and fertility in the adult germline. The sequence is that of E3 SUMO-protein ligase gei-17 from Caenorhabditis elegans.